Consider the following 229-residue polypeptide: Germin-like protein 3-6 (229 aa).

The signal sequence occupies residues methionine 1 to alanine 31. Cysteine 38 and cysteine 53 form a disulfide bridge. The 153-residue stretch at serine 67–glutamate 219 folds into the Cupin type-1 domain. Asparagine 80 and asparagine 83 each carry an N-linked (GlcNAc...) asparagine glycan. Positions 116, 118, 123, and 165 each coordinate Mn(2+).

The protein belongs to the germin family. Oligomer (believed to be a pentamer but probably hexamer).

It is found in the secreted. It localises to the extracellular space. The protein localises to the apoplast. Functionally, may play a role in plant defense. Probably has no oxalate oxidase activity even if the active site is conserved. This chain is Germin-like protein 3-6, found in Oryza sativa subsp. japonica (Rice).